A 697-amino-acid polypeptide reads, in one-letter code: Probable translocation protein y4yR (697 aa).

Transmembrane regions (helical) follow at residues 20–40 (VALM…VMAV), 42–62 (ALIG…LYVS), 67–87 (FSSL…LTVA), 107–127 (SFVI…VTMV), 200–220 (SIAG…IGLL), 235–255 (LLTI…SITA), 293–313 (VAMG…AAVF), and 372–392 (IARI…PIPV). Positions 675–697 (IRLPPSNGTSGEPRSIRPSATTG) are disordered. The span at 680 to 697 (SNGTSGEPRSIRPSATTG) shows a compositional bias: polar residues.

This sequence belongs to the FHIPEP (flagella/HR/invasion proteins export pore) family.

The protein localises to the cell inner membrane. In terms of biological role, could be involved in the secretion of an unknown factor. The protein is Probable translocation protein y4yR of Sinorhizobium fredii (strain NBRC 101917 / NGR234).